The sequence spans 180 residues: ATP-dependent protease subunit HslV (180 aa).

Threonine 5 is a catalytic residue. Glycine 165, cysteine 168, and threonine 171 together coordinate Na(+).

Belongs to the peptidase T1B family. HslV subfamily. As to quaternary structure, a double ring-shaped homohexamer of HslV is capped on each side by a ring-shaped HslU homohexamer. The assembly of the HslU/HslV complex is dependent on binding of ATP.

The protein localises to the cytoplasm. The enzyme catalyses ATP-dependent cleavage of peptide bonds with broad specificity.. With respect to regulation, allosterically activated by HslU binding. Functionally, protease subunit of a proteasome-like degradation complex believed to be a general protein degrading machinery. The chain is ATP-dependent protease subunit HslV from Helicobacter pylori (strain J99 / ATCC 700824) (Campylobacter pylori J99).